We begin with the raw amino-acid sequence, 644 residues long: Exoribonuclease 2 (644 aa).

Residues 189 to 516 (RQDLTALNFV…NHRLLKAAIK (328 aa)) form the RNB domain. The S1 motif domain occupies 561-643 (DTRFAAEIID…ETRSIIARPV (83 aa)).

Belongs to the RNR ribonuclease family. RNase II subfamily.

It localises to the cytoplasm. It carries out the reaction Exonucleolytic cleavage in the 3'- to 5'-direction to yield nucleoside 5'-phosphates.. Functionally, involved in mRNA degradation. Hydrolyzes single-stranded polyribonucleotides processively in the 3' to 5' direction. The polypeptide is Exoribonuclease 2 (Escherichia fergusonii (strain ATCC 35469 / DSM 13698 / CCUG 18766 / IAM 14443 / JCM 21226 / LMG 7866 / NBRC 102419 / NCTC 12128 / CDC 0568-73)).